The chain runs to 714 residues: Sodium-dependent acetylcholine transporter (714 aa).

A disordered region spans residues 1-21 (MSVSSNDPEQRNGRGMASGNN). The Cytoplasmic segment spans residues 1-74 (MSVSSNDPEQ…GNWSNKSDYL (74 aa)). A run of 3 helical transmembrane segments spans residues 75–95 (LAVI…FLVF), 100–120 (AAFL…MFFM), and 152–172 (ISGF…FYLI). The Extracellular segment spans residues 173–257 (NSFSFSIPWS…LSKGVDDFGT (85 aa)). Asparagine 192, asparagine 205, asparagine 211, and asparagine 222 each carry an N-linked (GlcNAc...) asparagine glycan. The next 9 helical transmembrane spans lie at 258 to 278 (LNWY…LCLF), 287 to 307 (VVYV…TRLL), 336 to 356 (AAVQ…TIAS), 368 to 388 (IWLV…LTFS), 422 to 442 (AGVS…LLVV), 476 to 496 (VCAL…LFWM), 502 to 522 (FVLT…INWV), 548 to 568 (ILFK…LWLD), and 584 to 604 (ILTA…VGIW). The Cytoplasmic portion of the chain corresponds to 605 to 714 (QFCIAKGTIT…IPKFERETAI (110 aa)).

Belongs to the sodium:neurotransmitter symporter (SNF) (TC 2.A.22) family. In terms of assembly, interacts with stn-1; part of the DGC. As to expression, body wall, and vulval and enteric muscles.

Its subcellular location is the cell membrane. It localises to the postsynaptic cell membrane. In terms of biological role, mediates sodium-dependent uptake of acetylcholine at neuromuscular junctions during periods of increased synaptic activity, may also prevent spillover to adjacent synaptic sites. Not involved in the uptake of other neurotransmitters (GABA, glycine, proline and glutamate) and there was also no inhibition of uptake by adding an excess of other candidate substrates (GABA, glycine, taurine, creatine, proline, alanine, carnitine, glutamate and betaine). Required for muscle integrity; altered transport of acetylcholine due to loss of dystrophin-glycoprotein complex (DGC) function results in muscle degeneration. The polypeptide is Sodium-dependent acetylcholine transporter (Caenorhabditis elegans).